A 341-amino-acid polypeptide reads, in one-letter code: Glycerol-3-phosphate dehydrogenase [NAD(P)+] (341 aa).

The NADPH site is built by S15, W16, R36, and K110. Sn-glycerol 3-phosphate is bound by residues K110, G139, and S141. A143 is an NADPH binding site. Residues K194, D247, S257, R258, and N259 each coordinate sn-glycerol 3-phosphate. The Proton acceptor role is filled by K194. Position 258 (R258) interacts with NADPH. V282 and E284 together coordinate NADPH.

This sequence belongs to the NAD-dependent glycerol-3-phosphate dehydrogenase family.

The protein localises to the cytoplasm. The enzyme catalyses sn-glycerol 3-phosphate + NAD(+) = dihydroxyacetone phosphate + NADH + H(+). It carries out the reaction sn-glycerol 3-phosphate + NADP(+) = dihydroxyacetone phosphate + NADPH + H(+). It participates in membrane lipid metabolism; glycerophospholipid metabolism. Catalyzes the reduction of the glycolytic intermediate dihydroxyacetone phosphate (DHAP) to sn-glycerol 3-phosphate (G3P), the key precursor for phospholipid synthesis. The chain is Glycerol-3-phosphate dehydrogenase [NAD(P)+] from Xanthomonas euvesicatoria pv. vesicatoria (strain 85-10) (Xanthomonas campestris pv. vesicatoria).